We begin with the raw amino-acid sequence, 410 residues long: Ribosomal protein S6 kinase-related protein (410 aa).

The region spanning Leu107–Val274 is the Protein kinase domain. ATP-binding positions include Val113–Val121 and Lys136. Asp229 acts as the Proton acceptor in catalysis.

Belongs to the protein kinase superfamily. Ser/Thr protein kinase family.

The enzyme catalyses L-seryl-[protein] + ATP = O-phospho-L-seryl-[protein] + ADP + H(+). The catalysed reaction is L-threonyl-[protein] + ATP = O-phospho-L-threonyl-[protein] + ADP + H(+). The polypeptide is Ribosomal protein S6 kinase-related protein (Homo sapiens (Human)).